The following is a 624-amino-acid chain: Chaperone protein HtpG (624 aa).

The interval 1-336 (MKGQETRGFQ…SNDLPLNVSR (336 aa)) is a; substrate-binding. Positions 337–552 (EILQDSSITR…NDEMSTQMAK (216 aa)) are b. Residues 553–624 (LFAAAGQAVP…IRRMNQLLVS (72 aa)) are c.

It belongs to the heat shock protein 90 family. As to quaternary structure, homodimer.

The protein localises to the cytoplasm. Its function is as follows. Molecular chaperone. Has ATPase activity. This Cronobacter sakazakii (strain ATCC BAA-894) (Enterobacter sakazakii) protein is Chaperone protein HtpG.